We begin with the raw amino-acid sequence, 57 residues long: MSKTVVRKNESLEDALRRFKRSVSKTGTLAEARKREFYEKPSVKRKKKSEAARKRKF.

It belongs to the bacterial ribosomal protein bS21 family.

The polypeptide is Small ribosomal subunit protein bS21 (Bacillus anthracis (strain A0248)).